The primary structure comprises 1015 residues: PHD finger protein 20-like protein 1 (1015 aa).

A Tudor 1 domain is found at 11-71 (ITFEIGARLE…SNRLRPLERP (61 aa)). Glycyl lysine isopeptide (Lys-Gly) (interchain with G-Cter in SUMO2) cross-links involve residues Lys-75 and Lys-79. The region spanning 85–141 (FDFKAGEEVLARWTDCRYYPAKIEAINKEGTFTVQFYDGVIRCLKRMHIKAMPEDAK) is the Tudor 2 domain. Disordered regions lie at residues 183–206 (AKNK…RDGG) and 309–367 (EQAI…KAPK). Composition is skewed to polar residues over residues 186-197 (KTGSKPRTSANS) and 315-346 (KPQS…SSGK). Ser-368 bears the Phosphoserine mark. Disordered regions lie at residues 389–455 (VINK…SSVP) and 478–513 (CGSE…NPTS). Positions 404 to 415 (PCKHSERRRRSQ) are enriched in basic residues. Ser-432 carries the phosphoserine modification. Polar residues-rich tracts occupy residues 443–453 (SISSQNQQESS) and 480–489 (SEVTGSQAPD). Lys-530 participates in a covalent cross-link: Glycyl lysine isopeptide (Lys-Gly) (interchain with G-Cter in SUMO2). Over residues 539-565 (EKTSTAFGKRKEKDKERKEKRDKDHYK) the composition is skewed to basic and acidic residues. The tract at residues 539 to 585 (EKTSTAFGKRKEKDKERKEKRDKDHYKPKQKKKKKKKKKSKQHDYSD) is disordered. Over residues 566-579 (PKQKKKKKKKKKSK) the composition is skewed to basic residues. A PHD-type zinc finger spans residues 681–729 (IVRCICELDEENGFMIQCEECLCWQHSVCMGLLEDSIPEQYICYICRDP). Lys-849 participates in a covalent cross-link: Glycyl lysine isopeptide (Lys-Gly) (interchain with G-Cter in SUMO2). Positions 859-878 (HSYQKPQSFSQDCHSLTDPG) are enriched in polar residues. Positions 859-889 (HSYQKPQSFSQDCHSLTDPGSSDDDDVSSFE) are disordered. Residues 879–889 (SSDDDDVSSFE) are compositionally biased toward acidic residues. The residue at position 907 (Lys-907) is an N6-acetyllysine.

Interacts with methylated DNMT1 (DNMT1K142me1). Interacts with SOX2.

It localises to the nucleus. Functionally, is a negative regulator of proteasomal degradation of a set of methylated proteins, including DNMT1 and SOX2. Involved in the maintainance of embryonic stem cells pluripotency, through the regulation of SOX2 levels. The polypeptide is PHD finger protein 20-like protein 1 (Phf20l1) (Rattus norvegicus (Rat)).